The primary structure comprises 53 residues: UPF0391 membrane protein Bcen2424_6479 (53 aa).

Helical transmembrane passes span 5–25 (AIIF…GIAA) and 30–50 (IAKI…LLGV).

This sequence belongs to the UPF0391 family.

It localises to the cell membrane. In Burkholderia cenocepacia (strain HI2424), this protein is UPF0391 membrane protein Bcen2424_6479.